Here is a 235-residue protein sequence, read N- to C-terminus: Leucyl/phenylalanyl-tRNA--protein transferase (235 aa).

This sequence belongs to the L/F-transferase family.

The protein localises to the cytoplasm. The catalysed reaction is N-terminal L-lysyl-[protein] + L-leucyl-tRNA(Leu) = N-terminal L-leucyl-L-lysyl-[protein] + tRNA(Leu) + H(+). The enzyme catalyses N-terminal L-arginyl-[protein] + L-leucyl-tRNA(Leu) = N-terminal L-leucyl-L-arginyl-[protein] + tRNA(Leu) + H(+). It carries out the reaction L-phenylalanyl-tRNA(Phe) + an N-terminal L-alpha-aminoacyl-[protein] = an N-terminal L-phenylalanyl-L-alpha-aminoacyl-[protein] + tRNA(Phe). In terms of biological role, functions in the N-end rule pathway of protein degradation where it conjugates Leu, Phe and, less efficiently, Met from aminoacyl-tRNAs to the N-termini of proteins containing an N-terminal arginine or lysine. This chain is Leucyl/phenylalanyl-tRNA--protein transferase, found in Aeromonas hydrophila subsp. hydrophila (strain ATCC 7966 / DSM 30187 / BCRC 13018 / CCUG 14551 / JCM 1027 / KCTC 2358 / NCIMB 9240 / NCTC 8049).